A 252-amino-acid polypeptide reads, in one-letter code: Triosephosphate isomerase (252 aa).

11-13 is a substrate binding site; the sequence is NWK. The Electrophile role is filled by histidine 97. Glutamate 169 acts as the Proton acceptor in catalysis. Substrate contacts are provided by residues glycine 175, serine 215, and 236 to 237; that span reads GG.

The protein belongs to the triosephosphate isomerase family. In terms of assembly, homodimer.

Its subcellular location is the cytoplasm. The enzyme catalyses D-glyceraldehyde 3-phosphate = dihydroxyacetone phosphate. It participates in carbohydrate biosynthesis; gluconeogenesis. It functions in the pathway carbohydrate degradation; glycolysis; D-glyceraldehyde 3-phosphate from glycerone phosphate: step 1/1. Functionally, involved in the gluconeogenesis. Catalyzes stereospecifically the conversion of dihydroxyacetone phosphate (DHAP) to D-glyceraldehyde-3-phosphate (G3P). The chain is Triosephosphate isomerase from Mycoplasmoides gallisepticum (strain R(low / passage 15 / clone 2)) (Mycoplasma gallisepticum).